Here is a 121-residue protein sequence, read N- to C-terminus: Basic phospholipase A2 BmjeTX-II (121 aa).

Disulfide bonds link C26-C114, C28-C45, C44-C95, C50-C121, C51-C88, C58-C82, and C76-C86. Positions 27, 29, and 31 each coordinate Ca(2+). The active site involves H48. D49 serves as a coordination point for Ca(2+). The active site involves D89.

The cofactor is Ca(2+). As to expression, expressed by the venom gland.

It localises to the secreted. The enzyme catalyses a 1,2-diacyl-sn-glycero-3-phosphocholine + H2O = a 1-acyl-sn-glycero-3-phosphocholine + a fatty acid + H(+). Functionally, snake venom phospholipase A2 (PLA2) that induces blockade of neuromuscular contraction in an indirectly stimulated chick biventer cervicis nerve-muscle preparation. Does not inhibit contraction of chick biventer cervicic nerve-muscle preparation in response to treatment with acetylcholine or KCl. The neuromuscular blockade is mediated by inhibitory action at the presynaptic motor nerve endings. Lyses skeletal myoblasts and myotubes in vitro, and intramuscular injection causes local muscle necrosis. Induces edema in the mouse foot pad. Induces a transient increase of IL-6 levels. PLA2 catalyzes the calcium-dependent hydrolysis of the 2-acyl groups in 3-sn-phosphoglycerides. In Bothrops marajoensis (Marajo lancehead), this protein is Basic phospholipase A2 BmjeTX-II.